The following is a 112-amino-acid chain: cAMP-regulated phosphoprotein 19 (112 aa).

A compositionally biased stretch (low complexity) spans 1–11; that stretch reads MSAESPEPASA. A disordered region spans residues 1–48; the sequence is MSAESPEPASAEEQKEMEDKVISPEKAEEAKLKARYPHLGQKPGGSDF. Position 2 is an N-acetylserine (Ser-2). Residues 12–32 are compositionally biased toward basic and acidic residues; it reads EEQKEMEDKVISPEKAEEAKL. 2 positions are modified to phosphoserine; by GWL: Ser-62 and Ser-104. The interval 73–112 is disordered; sequence KNKQLPTAAPDKTEVTGDHIPTPQDLPQRKPSLVASKLAG. Phosphoserine; by PKA is present on Ser-104.

Belongs to the endosulfine family. In terms of assembly, interacts (when phosphorylated at Ser-62) with PPP2R2D. In terms of processing, phosphorylation at Ser-62 by MASTL/GWL during mitosis is essential for interaction with PPP2R2D (PR55-delta) and subsequent inactivation of PP2A.

The protein localises to the cytoplasm. Protein phosphatase inhibitor that specifically inhibits protein phosphatase 2A (PP2A) during mitosis. Inhibition of PP2A is enhanced when ARPP19 is phosphorylated. When phosphorylated at Ser-62 during mitosis, specifically interacts with PPP2R2D (PR55-delta) and inhibits its activity, leading to inactivation of PP2A, an essential condition to keep cyclin-B1-CDK1 activity high during M phase. This chain is cAMP-regulated phosphoprotein 19 (ARPP19), found in Gallus gallus (Chicken).